The chain runs to 426 residues: Serine--tRNA ligase (426 aa).

Position 229–231 (229–231 (TAE)) interacts with L-serine. 260 to 262 (RSE) is a binding site for ATP. E283 contacts L-serine. An ATP-binding site is contributed by 347-350 (EIAS). S383 serves as a coordination point for L-serine.

It belongs to the class-II aminoacyl-tRNA synthetase family. Type-1 seryl-tRNA synthetase subfamily. In terms of assembly, homodimer. The tRNA molecule binds across the dimer.

The protein resides in the cytoplasm. It catalyses the reaction tRNA(Ser) + L-serine + ATP = L-seryl-tRNA(Ser) + AMP + diphosphate + H(+). The enzyme catalyses tRNA(Sec) + L-serine + ATP = L-seryl-tRNA(Sec) + AMP + diphosphate + H(+). It functions in the pathway aminoacyl-tRNA biosynthesis; selenocysteinyl-tRNA(Sec) biosynthesis; L-seryl-tRNA(Sec) from L-serine and tRNA(Sec): step 1/1. Its function is as follows. Catalyzes the attachment of serine to tRNA(Ser). Is also able to aminoacylate tRNA(Sec) with serine, to form the misacylated tRNA L-seryl-tRNA(Sec), which will be further converted into selenocysteinyl-tRNA(Sec). In Rickettsia bellii (strain OSU 85-389), this protein is Serine--tRNA ligase.